The chain runs to 735 residues: Stonin-1 (735 aa).

A disordered region spans residues 1 to 35; sequence MCSTNPGKWVTFDDDPAVQSSQKSKNFPLENQGVC. The region spanning 275-408 is the SHD domain; that stretch reads GWSFMLRIPE…KLPAVSKPKK (134 aa). Positions 412 to 715 constitute an MHD domain; it reads EQEISLEIVD…ACYNIQVEIE (304 aa).

Belongs to the Stoned B family. Ubiquitous.

It localises to the cytoplasm. Its subcellular location is the membrane. May be involved in the endocytic machinery. This is Stonin-1 (STON1) from Homo sapiens (Human).